A 1001-amino-acid polypeptide reads, in one-letter code: Serine/threonine-protein kinase TAO1-B (1001 aa).

The Protein kinase domain occupies 28 to 281 (FSDLREIGHG…SDELLKHMFV (254 aa)). Residues 34 to 42 (IGHGSFGAV) and K57 each bind ATP. The active-site Proton acceptor is D151. Disordered stretches follow at residues 324-435 (PAVE…YRNR) and 567-586 (KEELNENQSTPKKEKQEWLS). The span at 350-370 (SNQSIPSMSISASSQSSSVNS) shows a compositional bias: low complexity. 2 stretches are compositionally biased toward basic and acidic residues: residues 375 to 388 (SDDKSELDMMEGDH) and 577 to 586 (PKKEKQEWLS). Coiled-coil stretches lie at residues 458-651 (SELR…EHAM) and 754-877 (KAVL…EIEA). Positions 911-1001 (SHNPTGGPGP…ISNGSHMSYT (91 aa)) are disordered. Over residues 921–930 (HWGHPMAGPP) the composition is skewed to low complexity. 2 stretches are compositionally biased toward polar residues: residues 949–967 (GSVQGVSRGSTMGVRNSPQ) and 975–1001 (GGRTEQGMSRSTSVTSQISNGSHMSYT).

It belongs to the protein kinase superfamily. STE Ser/Thr protein kinase family. STE20 subfamily.

The protein localises to the cytoplasm. It catalyses the reaction L-seryl-[protein] + ATP = O-phospho-L-seryl-[protein] + ADP + H(+). The enzyme catalyses L-threonyl-[protein] + ATP = O-phospho-L-threonyl-[protein] + ADP + H(+). Serine/threonine-protein kinase involved in various processes such as p38/mapk14 stress-activated MAPK cascade, DNA damage response and regulation of cytoskeleton stability. Acts as an activator of the p38/MAPK14 stress-activated MAPK cascade by mediating phosphorylation and subsequent activation of upstream MAP kinase kinases. In response to DNA damage, involved in the G2/M transition DNA damage checkpoint by activating the p38/MAPK14 stress-activated MAPK cascade. The protein is Serine/threonine-protein kinase TAO1-B (taok1-b) of Xenopus laevis (African clawed frog).